Here is a 155-residue protein sequence, read N- to C-terminus: Ribosomal RNA large subunit methyltransferase H (155 aa).

S-adenosyl-L-methionine-binding positions include leucine 72, glycine 103, and 122 to 127 (LSDLTL).

It belongs to the RNA methyltransferase RlmH family. In terms of assembly, homodimer.

The protein localises to the cytoplasm. The enzyme catalyses pseudouridine(1915) in 23S rRNA + S-adenosyl-L-methionine = N(3)-methylpseudouridine(1915) in 23S rRNA + S-adenosyl-L-homocysteine + H(+). Functionally, specifically methylates the pseudouridine at position 1915 (m3Psi1915) in 23S rRNA. This is Ribosomal RNA large subunit methyltransferase H from Delftia acidovorans (strain DSM 14801 / SPH-1).